A 103-amino-acid chain; its full sequence is Small ribosomal subunit protein uS10 (103 aa).

This sequence belongs to the universal ribosomal protein uS10 family. As to quaternary structure, part of the 30S ribosomal subunit.

Involved in the binding of tRNA to the ribosomes. This is Small ribosomal subunit protein uS10 from Ruminiclostridium cellulolyticum (strain ATCC 35319 / DSM 5812 / JCM 6584 / H10) (Clostridium cellulolyticum).